Reading from the N-terminus, the 257-residue chain is MTPSEFRQSVRRGAFRGPTAGHCGPFAQANLAILPDAYAHDFLRFCQANPKACPLLGVGEPGAFRIAALGEDLDIRTDVPSYNVYRDGRLTERVESLEALWQDDFVVFAIGCSFSFEDMLAREGIGLRHVEEGRNVPMYRTSIANRRAGIFGGQLVVSMRPLRGADAIRAVQITSRFPGVHGAPIHIGHPRELGIDDLNAPEFGDAVTIRDGELPVFWACGVTPQTALMDAKLPIAIAHTPGHMLMTDITNASLAVF.

Belongs to the D-glutamate cyclase family.

In Burkholderia cenocepacia (strain ATCC BAA-245 / DSM 16553 / LMG 16656 / NCTC 13227 / J2315 / CF5610) (Burkholderia cepacia (strain J2315)), this protein is Putative hydro-lyase BceJ2315_40370.